A 621-amino-acid chain; its full sequence is Frizzled and smoothened-like protein H (621 aa).

The first 21 residues, 1-21 (MNLKFYNLIFFISFLICCIHG), serve as a signal peptide directing secretion. Residues 22–246 (QRYLPVEGGK…VWNQIFKIND (225 aa)) are Extracellular-facing. The FZ domain maps to 27–166 (VEGGKCEKYI…IEWVKYNLTI (140 aa)). Disulfide bonds link Cys32/Cys103 and Cys46/Cys96. 5 N-linked (GlcNAc...) asparagine glycosylation sites follow: Asn60, Asn107, Asn163, Asn176, and Asn206. A helical membrane pass occupies residues 247 to 267 (VLSSISLACTLILLFTFGILN). The Cytoplasmic portion of the chain corresponds to 268-277 (PKLNRFDKKN). The chain crosses the membrane as a helical span at residues 278-298 (LFFIAGVFGMSVSGVLIAANG). Topologically, residues 299-318 (SEKTVCPTPERYAVNTDRVC) are extracellular. Residues 319–339 (VASGFLVHFSALFAILWWTIG) traverse the membrane as a helical segment. The Cytoplasmic segment spans residues 340–359 (LADVYYGIKFVGKKIKIKVR). A helical transmembrane segment spans residues 360-380 (YYLLATLTISLAFTLVPLGTG). The Extracellular portion of the chain corresponds to 381–400 (QYQAGLSNVMCFLKDEIYQS). The chain crosses the membrane as a helical span at residues 401-421 (MTFFVPLGICLTMGTILMILV). Residues 422–464 (MREIYVIVKSNSTSSSFSSSSSKSKSKSKSSDSISYLKLQVKP) lie on the Cytoplasmic side of the membrane. A helical transmembrane segment spans residues 465–485 (MLNIILFYFTFLYLFLFVRVI). At 486 to 520 (NSRYQEYEDSAIPYMLCLAKGGGDSCRLKGPSAGS) the chain is on the extracellular side. Residues 521–541 (LGYFAYCLRIYGIYLFIISFL) form a helical membrane-spanning segment. The Cytoplasmic segment spans residues 542–621 (SSRTIKIWKE…RNYNTDDDDL (80 aa)). Residues 575-594 (FSSSKNTSTTQNSTLNNTES) are compositionally biased toward low complexity. A disordered region spans residues 575–603 (FSSSKNTSTTQNSTLNNTESDTSKRGNSS).

The protein belongs to the G-protein coupled receptor Fz/Smo family.

Its subcellular location is the membrane. The protein is Frizzled and smoothened-like protein H (fslH) of Dictyostelium discoideum (Social amoeba).